We begin with the raw amino-acid sequence, 533 residues long: Metal transporter nramp1 homolog (533 aa).

The segment at 1–33 (MTPRIESEESAPLVNKNNNNNNDNNNNNNVDEE) is disordered. The Cytoplasmic segment spans residues 1 to 68 (MTPRIESEES…PNIDKPDSKW (68 aa)). Positions 14-29 (VNKNNNNNNDNNNNNN) are enriched in low complexity. Residues 69-89 (INFKTLWAFTGPGFLMSIAYL) traverse the membrane as a helical segment. Residues 90–101 (DPGNLESDIQAG) are Extracellular-facing. Residues 102 to 122 (AMAGYQLLWVLFWSTVIGFWL) traverse the membrane as a helical segment. The Cytoplasmic portion of the chain corresponds to 123–158 (QMLASRLGVVTGKHLAEHCREQYPKTPRLLLWLMTE). A helical membrane pass occupies residues 159–179 (LAIIGSDIQEVIGTAIALQIL). Topologically, residues 180 to 182 (SNG) are extracellular. A helical transmembrane segment spans residues 183-203 (HIPLWAGVLFTAADTFTFLFL). The Cytoplasmic portion of the chain corresponds to 204–212 (EKYGIRKLE). The chain crosses the membrane as a helical span at residues 213–233 (AFFCSLIAIMAISFGVEYIIS). Over 234–256 (KPDQIEVVKGVFIPLCSQNNISQ) the chain is Extracellular. Residue N253 is glycosylated (N-linked (GlcNAc...) asparagine). A helical membrane pass occupies residues 257–277 (AVGILGAVVMPHNIYLHSALV). Topologically, residues 278-302 (QSREIDRKSETQVKIANKYNRLESA) are cytoplasmic. Residues 303–323 (FALIISFIINLLLVSVFAKGF) traverse the membrane as a helical segment. Topologically, residues 324 to 348 (YGETTEIGLSSAADFLMDKYGKVAK) are extracellular. The helical transmembrane segment at 349-368 (YIWAIGLFSAGQCSTMTGTY) threads the bilayer. At 369–387 (SGQFVMEGFLKLKIAPWKR) the chain is on the cytoplasmic side. The chain crosses the membrane as a helical span at residues 388-408 (LLITRCTAIVPAMVVAILSTS). The Extracellular portion of the chain corresponds to 409–415 (HLDSLDQ). Residues 416 to 436 (WLNILQSIQLPFAVVPVLLFT) form a helical membrane-spanning segment. Over 437–457 (SSEKIMGSKFKNHWLNNQFVR) the chain is Cytoplasmic. Residues 458–478 (FLSLLIIAINIYLIITFSMQI) form a helical membrane-spanning segment. Residues 479 to 481 (SES) lie on the Extracellular side of the membrane. Residues 482-502 (AWMISIVSISFFFYFIFIVYL) form a helical membrane-spanning segment. Residues 503–533 (SMGQENFNSMTKKIKNLFNNNSNQTYNNINY) lie on the Cytoplasmic side of the membrane.

Belongs to the NRAMP family.

The protein resides in the membrane. Functionally, depletes iron from the phagolysosome in an ATP-dependent process. May rather act as a symporter of protons and metal cations in an ATP-dependent process. Nramp1 overexpression protected cells from L.pneumophila infection. In Dictyostelium discoideum (Social amoeba), this protein is Metal transporter nramp1 homolog (nramp1).